The following is a 251-amino-acid chain: MAKDEVGHNFLARLGKTRLRPGGKKATDWLIANGGFSQDKKVLEVACNMGTTAIGLAKQFGCHIEGVDLDENALAKAQANIEANGLQEKIHVQRANAMKLPFEDESFDIVINEAMLTMLPVEAKKKAIAEYFRVLKPNGLLLTHDVMLVGNDHQTILENMRKAINVTVTPLTKDGWKGIFQESGFRNVDTFSGEMTLLSPKGMIYDEGIFGTLKIIRNAMKAENREQFKRMFKTFNDPEHKLHFIAVCSQK.

This is an uncharacterized protein from Haemophilus influenzae (strain ATCC 51907 / DSM 11121 / KW20 / Rd).